A 419-amino-acid polypeptide reads, in one-letter code: Peroxisome biogenesis factor 10 (419 aa).

At 1–27 (MPPSEEIKLRAVSPRPDFKANYLEFAN) the chain is on the peroxisomal matrix side. A helical membrane pass occupies residues 28–57 (APAIVRANQKDSYFETVLRDKLQNVIQIFK). Gly-58 is a topological domain (cytoplasmic). The helical transmembrane segment at 59 to 80 (QRFTHTHPEEIGVAAKALYLSL) threads the bilayer. At 81-108 (TTLLGTKTLGEEYVDLIYVSRDGKRIPR) the chain is on the peroxisomal matrix side. The chain crosses the membrane as a helical span at residues 109 to 141 (YLARAGFIFAYAILPYFLTRLFRRLKSSSTPKD). Over 142-158 (EVTEEKINKELPISLRI) the chain is Cytoplasmic. Residues 159 to 185 (EKYLSNMSYSKVLDTIMNLHIAVFYFS) form a helical membrane-spanning segment. The Peroxisomal matrix portion of the chain corresponds to 186–215 (GQFYNISKRFFSMRYAFGHKINKERTPNGN). Residues 216-235 (YELLGGLIVLQLVMKSLGGF) traverse the membrane as a helical segment. The Cytoplasmic segment spans residues 236–419 (KGLIGSFTGN…RTLGYFLVVF (184 aa)). Zn(2+) is bound by residues Cys-298, Cys-301, Cys-313, His-315, Cys-318, Cys-321, Cys-334, and Cys-347. Residues 298–360 (CMLCLSYMTN…FYIPTLNKIC (63 aa)) form an RING-type zinc finger.

It belongs to the pex2/pex10/pex12 family. In terms of assembly, component of the peroxisomal translocation complex, composed of at least PEX3, PEX2, PEX10 and PEX12. Interacts with PEX19.

The protein localises to the peroxisome membrane. It carries out the reaction S-ubiquitinyl-[E2 ubiquitin-conjugating enzyme]-L-cysteine + [acceptor protein]-L-lysine = [E2 ubiquitin-conjugating enzyme]-L-cysteine + N(6)-ubiquitinyl-[acceptor protein]-L-lysine.. The protein operates within protein modification; protein ubiquitination. With respect to regulation, the E3 ubiquitin-protein ligase activity is stimulated by PEX12. In terms of biological role, E3 ubiquitin-protein ligase component of the peroxisomal translocation complex. The two types of peroxisomal matrix targeting signals, PTS1 and PTS2, are first recognized in the cytosol by their receptors PEX5 and PEX7, respectively, which then carry the cargo to the peroxisomal membrane. The peroxisomal targeting signal (PTS) receptor-cargo complexes interact with peroxisomal membrane protein (PMP) components of the docking complex. They have then additional downstream interactions with the translocation complex, leading to the transport of fully folded and oligomerized cargo into the peroxisome matrix. The peroxisomal translocation complex forms the retrotranslocation channel with each subunit contributing transmembrane segments that coassemble into an open channel that specifically allows the passage of PEX5 and PEX20 through the peroxisomal membrane. Specifically catalyzes monoubiquitination of PEX5 and/or PEX20 at 'Cys-6' and 'Cys-8', respectively, a modification that acts as a signal for PEX5 or PEX20 export from peroxisomes to the cytosol, thereby promoting PEX5 and PEX20 recycling. The chain is Peroxisome biogenesis factor 10 from Komagataella pastoris (Yeast).